We begin with the raw amino-acid sequence, 332 residues long: MKIIAYAVRDDERPFFDTWMKENPDVEVKLVPELLTEDNVDLAKGFDGADVYQQKDYTAEVLNKLADEGVKNISLRNVGVDNLDVPTVKARGLNISNVPAYSPNAIAELSVTQLMQLLRQTPMFNKKLAKQDFRWAPDIAKELNTMTVGVIGTGRIGRAAIDIFKGFGAKVIGYDVYRNAELEKEGMYVDTLDELYAQADVITLHVPALKDNYHMLNADAFSKMKDGAYILNFARGTLIDSEDLIKALDSGKVAGAALVTYEYETKIFNKDLEGQTIDDKVFMNLFNRDNVLITPHTAFYTETAVHNMVHVSMNSNKQFIETGKADTQVKFD.

NAD(+) is bound by residues 155–156 (RI), Asp-175, 206–207 (VP), Asn-212, and 233–235 (FAR). Catalysis depends on residues Arg-235 and Glu-264. His-296 functions as the Proton donor in the catalytic mechanism.

This sequence belongs to the D-isomer specific 2-hydroxyacid dehydrogenase family. Homodimer.

It carries out the reaction (R)-lactate + NAD(+) = pyruvate + NADH + H(+). The protein is D-lactate dehydrogenase of Lactiplantibacillus pentosus (Lactobacillus pentosus).